The sequence spans 225 residues: Ribose-5-phosphate isomerase A (225 aa).

Residues 32–35, 85–88, and 98–101 each bind substrate; these read TGST, DGAD, and KGGG. Glu107 serves as the catalytic Proton acceptor. Position 125 (Lys125) interacts with substrate.

The protein belongs to the ribose 5-phosphate isomerase family. As to quaternary structure, homodimer.

It catalyses the reaction aldehydo-D-ribose 5-phosphate = D-ribulose 5-phosphate. It functions in the pathway carbohydrate degradation; pentose phosphate pathway; D-ribose 5-phosphate from D-ribulose 5-phosphate (non-oxidative stage): step 1/1. Functionally, catalyzes the reversible conversion of ribose-5-phosphate to ribulose 5-phosphate. In Hahella chejuensis (strain KCTC 2396), this protein is Ribose-5-phosphate isomerase A.